A 101-amino-acid chain; its full sequence is ATP synthase subunit c (101 aa).

The next 2 membrane-spanning stretches (helical) occupy residues 31 to 51 (AFAY…GAGQ) and 81 to 101 (AISE…IFVG).

This sequence belongs to the ATPase C chain family. As to quaternary structure, F-type ATPases have 2 components, F(1) - the catalytic core - and F(0) - the membrane proton channel. F(1) has five subunits: alpha(3), beta(3), gamma(1), delta(1), epsilon(1). F(0) has three main subunits: a(1), b(2) and c(10-14). The alpha and beta chains form an alternating ring which encloses part of the gamma chain. F(1) is attached to F(0) by a central stalk formed by the gamma and epsilon chains, while a peripheral stalk is formed by the delta and b chains.

It localises to the cell membrane. Its function is as follows. F(1)F(0) ATP synthase produces ATP from ADP in the presence of a proton or sodium gradient. F-type ATPases consist of two structural domains, F(1) containing the extramembraneous catalytic core and F(0) containing the membrane proton channel, linked together by a central stalk and a peripheral stalk. During catalysis, ATP synthesis in the catalytic domain of F(1) is coupled via a rotary mechanism of the central stalk subunits to proton translocation. Functionally, key component of the F(0) channel; it plays a direct role in translocation across the membrane. A homomeric c-ring of between 10-14 subunits forms the central stalk rotor element with the F(1) delta and epsilon subunits. This chain is ATP synthase subunit c, found in Mesomycoplasma hyopneumoniae (strain J / ATCC 25934 / NCTC 10110) (Mycoplasma hyopneumoniae).